A 517-amino-acid polypeptide reads, in one-letter code: Beta-glucosidase 1 (517 aa).

The first 22 residues, 1–22 (MEDVLTLITMIVLLLLAFHGFG), serve as a signal peptide directing secretion. A beta-D-glucoside-binding positions include Q48, H145, and 190–191 (NE). E191 (proton donor) is an active-site residue. An intrachain disulfide couples C210 to C217. 2 N-linked (GlcNAc...) asparagine glycosylation sites follow: N216 and N221. Positions 333 and 406 each coordinate a beta-D-glucoside. Residue E406 is the Nucleophile of the active site. The N-linked (GlcNAc...) asparagine glycan is linked to N441. 2 residues coordinate a beta-D-glucoside: W451 and F467. N-linked (GlcNAc...) asparagine glycosylation is found at N473 and N512.

The protein belongs to the glycosyl hydrolase 1 family.

It carries out the reaction Hydrolysis of terminal, non-reducing beta-D-glucosyl residues with release of beta-D-glucose.. The polypeptide is Beta-glucosidase 1 (Arabidopsis thaliana (Mouse-ear cress)).